The chain runs to 592 residues: MKHQVAEILSKVIDQFKQEGVLDASFQPRVNVENTRDKSHGDFATNLAMMLTKVVGKPPREVAEMIVARLPESDVIEKVEIAGPGFINFFVLDVAKFDVLPSILEAGETFGECNVGQGRSVLVEYVSANPTGPLHVGHGRGAAYGASVASLLSKAGFRVSREYYVNDAGRQMDILAASTWLRYLQHCGEELTFPSNGYKGDYIFDIAQSLYEEKGDALRKPAENVFEGVADDEVTTADGETLGDKEKHIDDLIEKTKVLLGDEHYRVVFDKALDAILGDIREDLAEFGVEFENWFSERSLMDSGVIDAALEKLQAAGKIYEKKGALWFKSSEYGDEKDRVVVRENGLKTYFASDIAYHFNKLERGFDVLIDIWGSDHHGYVPRVKAAMQALDTNPEALEVLLVQFAVLYRGGEKLAMSTRSGQFVTLRELRDEVGADAARFFYVQRKSEQHMDFDLDLAKSKSNENPVYYIQYAHARICQVLSLAEERGYQLDTEMGLANLNRLTQEPEADLATLLAKYPEIIARAALAYEPHQIAYYLKELAHGLHAYYNSTQFIVEYEPLRNARLTLVVAVRQVLQNGLKLLSVAAPEKM.

The short motif at 128-138 is the 'HIGH' region element; the sequence is ANPTGPLHVGH.

The protein belongs to the class-I aminoacyl-tRNA synthetase family. Monomer.

Its subcellular location is the cytoplasm. The enzyme catalyses tRNA(Arg) + L-arginine + ATP = L-arginyl-tRNA(Arg) + AMP + diphosphate. The chain is Arginine--tRNA ligase from Hydrogenovibrio crunogenus (strain DSM 25203 / XCL-2) (Thiomicrospira crunogena).